The chain runs to 450 residues: 23S rRNA (uracil(1939)-C(5))-methyltransferase RlmD (450 aa).

Residues 1-22 (MAKHDRGLRFQPAGGSRAPQIP) form a disordered region. Positions 20 to 78 (QIPVGKKQRLTIQRLANDGRGIAFVEGRTWFVSGALAGEEVEARVLGSHGKVVEARAER) constitute a TRAM domain. The [4Fe-4S] cluster site is built by Cys91, Cys97, Cys100, and Cys179. S-adenosyl-L-methionine is bound by residues Gln283, Phe312, Asn317, Glu333, Asp360, and Asp381. Residue Cys407 is the Nucleophile of the active site.

This sequence belongs to the class I-like SAM-binding methyltransferase superfamily. RNA M5U methyltransferase family. RlmD subfamily.

It catalyses the reaction uridine(1939) in 23S rRNA + S-adenosyl-L-methionine = 5-methyluridine(1939) in 23S rRNA + S-adenosyl-L-homocysteine + H(+). Catalyzes the formation of 5-methyl-uridine at position 1939 (m5U1939) in 23S rRNA. In Pseudomonas fluorescens (strain ATCC BAA-477 / NRRL B-23932 / Pf-5), this protein is 23S rRNA (uracil(1939)-C(5))-methyltransferase RlmD.